Reading from the N-terminus, the 163-residue chain is Adenosine 5'-monophosphoramidase HINT2 (163 aa).

A mitochondrion-targeting transit peptide spans 1-17 (MAAAVVLAAGLRAARRA). The region spanning 55–163 (IFSRILDKSL…GGRQLQWPPG (109 aa)) is the HIT domain. AMP-binding residues include S63 and D80. Residue K119 is modified to N6-acetyllysine. Position 136 (N136) interacts with AMP. An N6-acetyllysine modification is found at K139. AMP contacts are provided by residues 142–145 (AQSV) and 149–151 (HIH). A Histidine triad motif motif is present at residues 147–151 (HLHIH). The Tele-AMP-histidine intermediate role is filled by H149.

This sequence belongs to the HINT family. As to expression, high expression in liver and pancreas. Expression is significantly down-regulated in hepatocellular carcinoma (HCC) patients.

It localises to the mitochondrion. It carries out the reaction adenosine 5'-phosphoramidate + H2O = AMP + NH4(+). In terms of biological role, exhibits adenosine 5'-monophosphoramidase activity, hydrolyzing purine nucleotide phosphoramidates with a single phosphate group such as adenosine 5'monophosphoramidate (AMP-NH2) to yield AMP and NH2. Hydrolyzes adenosine 5'-O-p-nitrophenylphosphoramidate (AMP-pNA). Hydrolyzes fluorogenic purine nucleoside tryptamine phosphoramidates in vitro. May be involved in steroid biosynthesis. May play a role in apoptosis. The polypeptide is Adenosine 5'-monophosphoramidase HINT2 (Homo sapiens (Human)).